Reading from the N-terminus, the 170-residue chain is Arginine repressor (170 aa).

The protein belongs to the ArgR family.

It localises to the cytoplasm. It functions in the pathway amino-acid biosynthesis; L-arginine biosynthesis [regulation]. Regulates arginine biosynthesis genes. This Bifidobacterium longum (strain DJO10A) protein is Arginine repressor.